Reading from the N-terminus, the 30-residue chain is Natriuretic peptides A (30 aa).

A propeptide spanning residues 1-3 is cleaved from the precursor; sequence APR. Cysteine 11 and cysteine 27 form a disulfide bridge.

It belongs to the natriuretic peptide family. Post-translationally, cleaved upon secretion to produce the functional hormone.

The protein resides in the secreted. Functionally, hormone playing a key role in cardiovascular homeostasis through regulation of natriuresis, diuresis, and vasodilation. Has a cGMP-stimulating activity. The protein is Natriuretic peptides A of Pelophylax ridibundus (Marsh frog).